Reading from the N-terminus, the 220-residue chain is UPF0758 protein Asuc_0013 (220 aa).

Positions 98 to 220 (EFTNPLTVRL…YFSFAEQDWL (123 aa)) constitute an MPN domain. H169, H171, and D182 together coordinate Zn(2+). Positions 169–182 (HNHPSGSAEPSASD) match the JAMM motif motif.

This sequence belongs to the UPF0758 family.

The polypeptide is UPF0758 protein Asuc_0013 (Actinobacillus succinogenes (strain ATCC 55618 / DSM 22257 / CCUG 43843 / 130Z)).